Consider the following 111-residue polypeptide: T cell receptor beta variable 30 (111 aa).

The N-terminal stretch at 1-18 (MLCSLLALLLGTFFGVRS) is a signal peptide. One can recognise an Ig-like domain in the interval 19 to 111 (QTIHQWPATL…DSGFYLCAWS (93 aa)). Residues Cys40 and Cys108 are joined by a disulfide bond. Residue Asn80 is glycosylated (N-linked (GlcNAc...) asparagine).

As to quaternary structure, alpha-beta TR is a heterodimer composed of an alpha and beta chain; disulfide-linked. The alpha-beta TR is associated with the transmembrane signaling CD3 coreceptor proteins to form the TR-CD3 (TcR or TCR). The assembly of alpha-beta TR heterodimers with CD3 occurs in the endoplasmic reticulum where a single alpha-beta TR heterodimer associates with one CD3D-CD3E heterodimer, one CD3G-CD3E heterodimer and one CD247 homodimer forming a stable octameric structure. CD3D-CD3E and CD3G-CD3E heterodimers preferentially associate with TR alpha and TR beta chains, respectively. The association of the CD247 homodimer is the last step of TcR assembly in the endoplasmic reticulum and is required for transport to the cell surface.

The protein resides in the cell membrane. Functionally, v region of the variable domain of T cell receptor (TR) beta chain that participates in the antigen recognition. Alpha-beta T cell receptors are antigen specific receptors which are essential to the immune response and are present on the cell surface of T lymphocytes. Recognize peptide-major histocompatibility (MH) (pMH) complexes that are displayed by antigen presenting cells (APC), a prerequisite for efficient T cell adaptive immunity against pathogens. Binding of alpha-beta TR to pMH complex initiates TR-CD3 clustering on the cell surface and intracellular activation of LCK that phosphorylates the ITAM motifs of CD3G, CD3D, CD3E and CD247 enabling the recruitment of ZAP70. In turn ZAP70 phosphorylates LAT, which recruits numerous signaling molecules to form the LAT signalosome. The LAT signalosome propagates signal branching to three major signaling pathways, the calcium, the mitogen-activated protein kinase (MAPK) kinase and the nuclear factor NF-kappa-B (NF-kB) pathways, leading to the mobilization of transcription factors that are critical for gene expression and essential for T cell growth and differentiation. The T cell repertoire is generated in the thymus, by V-(D)-J rearrangement. This repertoire is then shaped by intrathymic selection events to generate a peripheral T cell pool of self-MH restricted, non-autoaggressive T cells. Post-thymic interaction of alpha-beta TR with the pMH complexes shapes TR structural and functional avidity. The polypeptide is T cell receptor beta variable 30 (Homo sapiens (Human)).